The sequence spans 464 residues: MAATRIEKDSMGPIEVPADQLWGAQTQRSLEHFRISQEKMPVALIHALALTKQAAASVNMDLGLLPQERGEAIIAAAKEVLEGKHPTEFPLAIWQTGSGTQSNMNMNEVLANRGSEILGGVRGSERLIHPNDDVNKSQSSNDVFPTAMHVAAVIALSEHLIPELKILQKTLADKAEAYKDIVKIGRTHLQDATPLTLGQEISGWAAMLTHNLKHIEDSIPHVCELALGGTAVGTGLNTHPEYAVRVAKKLAELTNHSFVTAPNKFEALATCDALVHSHGALKGLAASIMKIANDVRWLASGPRCGIGEISIPENEPGSSIMPGKVNPTQCEAVTMLCAQVMGNDVAINIGGASGNFELNVFRPMVINNFLQSVRLLADGMRSFNEHCAVGIEPNRDRITQLLNESLMLVTALNTHIGYDKAAEIAKKAHKEGLTLKQSAMKLGYLTEAEFDEWVRPEDMVGSLK.

Residues 98-100 (SGT), arginine 126, 129-132 (HPND), 139-141 (SSN), and threonine 187 contribute to the substrate site. Histidine 188 acts as the Proton donor/acceptor in catalysis. The active site involves serine 318. Residues serine 319 and 324-326 (KVN) each bind substrate.

The protein belongs to the class-II fumarase/aspartase family. Fumarase subfamily. Homotetramer.

It localises to the cytoplasm. The enzyme catalyses (S)-malate = fumarate + H2O. Its pathway is carbohydrate metabolism; tricarboxylic acid cycle; (S)-malate from fumarate: step 1/1. Its function is as follows. Involved in the TCA cycle. Catalyzes the stereospecific interconversion of fumarate to L-malate. This Photorhabdus laumondii subsp. laumondii (strain DSM 15139 / CIP 105565 / TT01) (Photorhabdus luminescens subsp. laumondii) protein is Fumarate hydratase class II.